A 967-amino-acid polypeptide reads, in one-letter code: RNA polymerase II C-terminal domain phosphatase-like 1 (967 aa).

The short motif at 38–41 (RKKK) is the Nuclear localization signal (NLS) element. An FCP1 homology domain is found at 151 to 401 (LNLRCLGIVF…TPVLCVARNV (251 aa)). Disordered stretches follow at residues 548–611 (SEPS…VQSR) and 643–712 (MEKH…RNSD). Positions 590–603 (PSEPSFPQRPPVQA) are enriched in pro residues. Positions 665-684 (RMLHENRRPPKESLRRDEQL) are enriched in basic and acidic residues. DRBM domains are found at residues 724–792 (TETS…NLAD) and 855–925 (GSIT…SVRS). The disordered stretch occupies residues 928 to 967 (GQPLHKRQGSPRSFGGMSNKRLKPDFQRSLQRMPSSGRYS). A required for nuclear localization (NLS) region spans residues 945–967 (SNKRLKPDFQRSLQRMPSSGRYS). Positions 947–951 (KRLKP) match the Nuclear localization signal (NLS) motif. Positions 955-967 (RSLQRMPSSGRYS) are enriched in polar residues.

Interacts with FREE1, ANAC019, MYB3, MYB4 and MYB32. Binds to DMS3. Interacts with RCF3. Interacts with RS40 and RS41. Interacts with EIF4A3. Interacts with UPF3. Requires Mg(2+) as cofactor. The cofactor is Co(2+). Mn(2+) serves as cofactor. In terms of tissue distribution, expressed at very low levels in roots, leaves, stems, flowers and siliques.

The protein resides in the nucleus. The protein localises to the nucleus speckle. The enzyme catalyses O-phospho-L-seryl-[protein] + H2O = L-seryl-[protein] + phosphate. The catalysed reaction is O-phospho-L-threonyl-[protein] + H2O = L-threonyl-[protein] + phosphate. In terms of biological role, processively dephosphorylates 'Ser-5' but not 'Ser-2' of the heptad repeats YSPTSPS in the C-terminal domain of the largest RNA polymerase II subunit (RPB1). This promotes the activity of RNA polymerase II. Together with CPL2, required for male gametes fertility. Multifunctional regulator that modulates plant growth, stress, and phytohormones responses. Negative regulator of stress gene transcription involved in abscisic acid (ABA) mediated and jasmonic acid (JA) mediated signaling pathways, NaCl, osmotic stress, wounding, and cold resistance. Negatively regulates the expression of jasmonic acid (JA) biosynthetic genes in response to wounding. Forms a complex with RCF3 that modulates co-transcriptional processes such as mRNA capping and polyadenylation, and functions to repress stress-inducible gene expression. Dephosphorylates RCF3. Involved in the dephosphorylation of EIF4A3. This dephosphorylation retains EIF4A3 in the nucleus and limits its accumulation in the cytoplasm. Is essential for the degradation of the nonsense-mediated mRNA decay (NMD) transcripts. The chain is RNA polymerase II C-terminal domain phosphatase-like 1 from Arabidopsis thaliana (Mouse-ear cress).